The primary structure comprises 252 residues: Acyltransferase PGAP2 (252 aa).

The Cytoplasmic portion of the chain corresponds to 1–22; the sequence is MVPVGPERGANSLFSLRFTTFA. A helical transmembrane segment spans residues 23–43; sequence VGTVSLPLFAFLFCIVWSLLF. The Lumenal portion of the chain corresponds to 44-77; that stretch reads NFSETTATHCHVPNYLPSVSAAIGGETPQRYIWR. The chain crosses the membrane as a helical span at residues 78-98; that stretch reads LCIGLHSAPRFLVGVAYLHYY. Over 99–111 the chain is Cytoplasmic; the sequence is QGTPCSSPAYPRL. A helical transmembrane segment spans residues 112–132; it reads CHLNFLLNCCEIFFLILLTYV. Topologically, residues 133 to 142 are lumenal; it reads SSSENYEVHK. A helical transmembrane segment spans residues 143–163; the sequence is LGFMAFMLFSVGYMFVTCSLW. The Cytoplasmic segment spans residues 164 to 184; it reads RVARKGSGSLEERTSYAWKKR. Residues 185-205 traverse the membrane as a helical segment; the sequence is LFGFYLLMFLSSILVYIWHNM. Topologically, residues 206 to 208 are lumenal; the sequence is YCE. Residues 209–229 traverse the membrane as a helical segment; that stretch reads AGVYTVFALLEYLVVLSNMGF. Over 230-252 the chain is Cytoplasmic; that stretch reads HMTAWWDFGNKELMICSPGDKRI.

This sequence belongs to the PGAP2 family.

It localises to the golgi apparatus membrane. In terms of biological role, involved in the fatty acid remodeling steps of GPI-anchor maturation where the unsaturated acyl chain at sn-2 of inositol phosphate is replaced by a saturated stearoyl chain. May catalyze the second step of the fatty acid remodeling, by reacylating a lyso-GPI intermediate at sn-2 of inositol phosphate by a saturated chain. The fatty acid remodeling steps is critical for the integration of GPI-APs into lipid rafts. The sequence is that of Acyltransferase PGAP2 from Xenopus tropicalis (Western clawed frog).